Consider the following 209-residue polypeptide: Uridine kinase (209 aa).

ATP is bound at residue Gly-16–Thr-23.

The protein belongs to the uridine kinase family.

The protein localises to the cytoplasm. It carries out the reaction uridine + ATP = UMP + ADP + H(+). The enzyme catalyses cytidine + ATP = CMP + ADP + H(+). Its pathway is pyrimidine metabolism; CTP biosynthesis via salvage pathway; CTP from cytidine: step 1/3. It participates in pyrimidine metabolism; UMP biosynthesis via salvage pathway; UMP from uridine: step 1/1. This is Uridine kinase from Lactiplantibacillus plantarum (strain ATCC BAA-793 / NCIMB 8826 / WCFS1) (Lactobacillus plantarum).